The sequence spans 407 residues: Glucose-1-phosphate adenylyltransferase 2 (407 aa).

Residues Y97, G162, 177–178 (EK), and S195 contribute to the alpha-D-glucose 1-phosphate site.

Belongs to the bacterial/plant glucose-1-phosphate adenylyltransferase family. As to quaternary structure, homotetramer.

The enzyme catalyses alpha-D-glucose 1-phosphate + ATP + H(+) = ADP-alpha-D-glucose + diphosphate. Its pathway is glycan biosynthesis; glycogen biosynthesis. Its function is as follows. Involved in the biosynthesis of ADP-glucose, a building block required for the elongation reactions to produce glycogen. Catalyzes the reaction between ATP and alpha-D-glucose 1-phosphate (G1P) to produce pyrophosphate and ADP-Glc. This is Glucose-1-phosphate adenylyltransferase 2 from Vibrio cholerae serotype O1 (strain ATCC 39315 / El Tor Inaba N16961).